We begin with the raw amino-acid sequence, 152 residues long: Xanthine-guanine phosphoribosyltransferase (152 aa).

5-phospho-alpha-D-ribose 1-diphosphate is bound by residues 37–38 (RG), R69, and 88–96 (DDLVDSGDT). R69 provides a ligand contact to GMP. D89 is a Mg(2+) binding site. 2 residues coordinate guanine: D92 and I135. Xanthine contacts are provided by D92 and I135. Residues 92–96 (DSGDT) and 134–135 (WI) each bind GMP.

This sequence belongs to the purine/pyrimidine phosphoribosyltransferase family. XGPT subfamily. In terms of assembly, homotetramer. It depends on Mg(2+) as a cofactor.

It localises to the cell inner membrane. The enzyme catalyses GMP + diphosphate = guanine + 5-phospho-alpha-D-ribose 1-diphosphate. It carries out the reaction XMP + diphosphate = xanthine + 5-phospho-alpha-D-ribose 1-diphosphate. It catalyses the reaction IMP + diphosphate = hypoxanthine + 5-phospho-alpha-D-ribose 1-diphosphate. Its pathway is purine metabolism; GMP biosynthesis via salvage pathway; GMP from guanine: step 1/1. It functions in the pathway purine metabolism; XMP biosynthesis via salvage pathway; XMP from xanthine: step 1/1. Its function is as follows. Purine salvage pathway enzyme that catalyzes the transfer of the ribosyl-5-phosphate group from 5-phospho-alpha-D-ribose 1-diphosphate (PRPP) to the N9 position of the 6-oxopurines guanine and xanthine to form the corresponding ribonucleotides GMP (guanosine 5'-monophosphate) and XMP (xanthosine 5'-monophosphate), with the release of PPi. To a lesser extent, also acts on hypoxanthine. This Aliivibrio salmonicida (strain LFI1238) (Vibrio salmonicida (strain LFI1238)) protein is Xanthine-guanine phosphoribosyltransferase.